The primary structure comprises 128 residues: Small ribosomal subunit protein uS9 (128 aa).

This sequence belongs to the universal ribosomal protein uS9 family.

This is Small ribosomal subunit protein uS9 from Cytophaga hutchinsonii (strain ATCC 33406 / DSM 1761 / CIP 103989 / NBRC 15051 / NCIMB 9469 / D465).